The chain runs to 27 residues: thr operon leader peptide (27 aa).

It belongs to the thr operon leader peptide family.

In terms of biological role, this protein is involved in control of the biosynthesis of threonine. The chain is thr operon leader peptide from Escherichia coli O157:H7.